The following is a 207-amino-acid chain: Holliday junction branch migration complex subunit RuvA (207 aa).

The tract at residues 1 to 63 is domain I; the sequence is MISSLRGTVL…EDSLQLFGFS (63 aa). Residues 64–142 form a domain II region; the sequence is GLEQLQVFEL…ACRRPSAPSA (79 aa). Positions 142–146 are flexible linker; the sequence is ARRPS. The domain III stretch occupies residues 147–207; sequence APSSVSDSVL…RLGPANQAAR (61 aa).

Belongs to the RuvA family. In terms of assembly, homotetramer. Forms an RuvA(8)-RuvB(12)-Holliday junction (HJ) complex. HJ DNA is sandwiched between 2 RuvA tetramers; dsDNA enters through RuvA and exits via RuvB. An RuvB hexamer assembles on each DNA strand where it exits the tetramer. Each RuvB hexamer is contacted by two RuvA subunits (via domain III) on 2 adjacent RuvB subunits; this complex drives branch migration. In the full resolvosome a probable DNA-RuvA(4)-RuvB(12)-RuvC(2) complex forms which resolves the HJ.

Its subcellular location is the cytoplasm. The RuvA-RuvB-RuvC complex processes Holliday junction (HJ) DNA during genetic recombination and DNA repair, while the RuvA-RuvB complex plays an important role in the rescue of blocked DNA replication forks via replication fork reversal (RFR). RuvA specifically binds to HJ cruciform DNA, conferring on it an open structure. The RuvB hexamer acts as an ATP-dependent pump, pulling dsDNA into and through the RuvAB complex. HJ branch migration allows RuvC to scan DNA until it finds its consensus sequence, where it cleaves and resolves the cruciform DNA. This is Holliday junction branch migration complex subunit RuvA from Leifsonia xyli subsp. xyli (strain CTCB07).